Consider the following 180-residue polypeptide: Large ribosomal subunit protein mL41 (180 aa).

Residues Met1–Ala21 constitute a mitochondrion transit peptide.

The protein belongs to the mitochondrion-specific ribosomal protein mL41 family. Component of the mitochondrial ribosome large subunit (39S) which comprises a 16S rRNA and about 50 distinct proteins.

It is found in the mitochondrion. The sequence is that of Large ribosomal subunit protein mL41 (mrpl-41) from Caenorhabditis elegans.